The following is a 449-amino-acid chain: Bifunctional protein GlmU (449 aa).

The tract at residues 1 to 229 is pyrophosphorylase; the sequence is MNHFAVILAA…FEETIGVNDR (229 aa). UDP-N-acetyl-alpha-D-glucosamine is bound by residues 8–11, Lys22, Gln72, and 77–78; these read LAAG and GT. Residue Asp102 participates in Mg(2+) binding. Residues Gly139, Glu154, Asn169, and Asn227 each contribute to the UDP-N-acetyl-alpha-D-glucosamine site. Residue Asn227 coordinates Mg(2+). The tract at residues 230–250 is linker; it reads VALAQAETSMRKRTNEHWMRQ. Residues 251–449 form an N-acetyltransferase region; that stretch reads GVTFIDPAST…ERQTTKPDYR (199 aa). The UDP-N-acetyl-alpha-D-glucosamine site is built by Arg332 and Lys350. The active-site Proton acceptor is the His362. Residues Tyr365 and Asn376 each contribute to the UDP-N-acetyl-alpha-D-glucosamine site. Acetyl-CoA contacts are provided by residues 385–386, Ala422, and Arg439; that span reads NY.

The protein in the N-terminal section; belongs to the N-acetylglucosamine-1-phosphate uridyltransferase family. In the C-terminal section; belongs to the transferase hexapeptide repeat family. In terms of assembly, homotrimer. Mg(2+) is required as a cofactor.

Its subcellular location is the cytoplasm. The enzyme catalyses alpha-D-glucosamine 1-phosphate + acetyl-CoA = N-acetyl-alpha-D-glucosamine 1-phosphate + CoA + H(+). It catalyses the reaction N-acetyl-alpha-D-glucosamine 1-phosphate + UTP + H(+) = UDP-N-acetyl-alpha-D-glucosamine + diphosphate. It participates in nucleotide-sugar biosynthesis; UDP-N-acetyl-alpha-D-glucosamine biosynthesis; N-acetyl-alpha-D-glucosamine 1-phosphate from alpha-D-glucosamine 6-phosphate (route II): step 2/2. The protein operates within nucleotide-sugar biosynthesis; UDP-N-acetyl-alpha-D-glucosamine biosynthesis; UDP-N-acetyl-alpha-D-glucosamine from N-acetyl-alpha-D-glucosamine 1-phosphate: step 1/1. Its pathway is bacterial outer membrane biogenesis; LPS lipid A biosynthesis. Its function is as follows. Catalyzes the last two sequential reactions in the de novo biosynthetic pathway for UDP-N-acetylglucosamine (UDP-GlcNAc). The C-terminal domain catalyzes the transfer of acetyl group from acetyl coenzyme A to glucosamine-1-phosphate (GlcN-1-P) to produce N-acetylglucosamine-1-phosphate (GlcNAc-1-P), which is converted into UDP-GlcNAc by the transfer of uridine 5-monophosphate (from uridine 5-triphosphate), a reaction catalyzed by the N-terminal domain. The protein is Bifunctional protein GlmU of Exiguobacterium sibiricum (strain DSM 17290 / CCUG 55495 / CIP 109462 / JCM 13490 / 255-15).